A 117-amino-acid chain; its full sequence is Venom nerve growth factor (117 aa).

3 cysteine pairs are disulfide-bonded: cysteine 12–cysteine 77, cysteine 55–cysteine 105, and cysteine 65–cysteine 107. Asparagine 21 carries an N-linked (GlcNAc...) asparagine glycan.

It belongs to the NGF-beta family. Homodimer; non-covalently linked. Expressed by the venom gland.

The protein resides in the secreted. Its function is as follows. Nerve growth factor is important for the development and maintenance of the sympathetic and sensory nervous systems. It stimulates division and differentiation of sympathetic and embryonic sensory neurons as well as basal forebrain cholinergic neurons in the brain. Its relevance in the snake venom is not clear. However, it has been shown to inhibit metalloproteinase-dependent proteolysis of platelet glycoprotein Ib alpha, suggesting a metalloproteinase inhibition to prevent metalloprotease autodigestion and/or protection against prey proteases. Binds a lipid between the two protein chains in the homodimer. The lipid-bound form promotes histamine relase from mouse mast cells, contrary to the lipid-free form. The chain is Venom nerve growth factor from Daboia russelii (Russel's viper).